We begin with the raw amino-acid sequence, 241 residues long: Peroxisomal membrane protein 11C (241 aa).

The Cytoplasmic portion of the chain corresponds to 1-124; the sequence is MASLSGLASA…ARVLHVDSSR (124 aa). Residues 125–149 traverse the membrane as a helical segment; sequence WWTLSTTLWALSLLLGVARSLWMLL. Residues 150-211 lie on the Lumenal side of the membrane; that stretch reads KLRQRLRSPT…GVLWAGRFPP (62 aa). The chain crosses the membrane as a helical span at residues 212-227; sequence WLVGLMGTISSILSMY. Residues 228-241 lie on the Cytoplasmic side of the membrane; it reads QAARAGGQAEATTP.

It belongs to the peroxin-11 family. As to quaternary structure, homodimer. Heterodimer with either PEX11A or PEX11B. Interacts with FIS1.

The protein localises to the peroxisome membrane. Its function is as follows. Promotes membrane protrusion and elongation on the peroxisomal surface. The chain is Peroxisomal membrane protein 11C (PEX11G) from Homo sapiens (Human).